The primary structure comprises 259 residues: uncharacterized protein (259 aa).

Residues 1–28 (MNIKRRLKYLTSCLLVSAFFWINSSAWA) form the signal peptide. 2 consecutive transmembrane segments (helical) span residues 32 to 52 (EIPPSAPWVIYLGGFGGIYVA) and 191 to 211 (WGFLVGFGLGYDFCPWFGIFT).

Its subcellular location is the cell membrane. This is an uncharacterized protein from Coxiella burnetii (strain RSA 493 / Nine Mile phase I).